The following is a 385-amino-acid chain: MAIVIVGAGTAGVNAAFWLRQYGYKGGIRLLSRESVTPYQRPPLSKAFLTSETAESAIPLKPESFYTNNNISISLNTQIVSIDVGRKVVAAKDGEEYAYEKLILATGASARRLTCEGSELSGVCYLRSMEDAKNLRRKLVESASVVVLGGGVIGLEVASAAVGIGRRVTVIEAAPRVMARVVTPAAANLVRARLEAEGVGFKLNAKLTSIKGRNGHVNQCVLESGEKIQADLIIVGIGAIPELELATEAALEVSNGVVVDDQMRTSDTSIYAIGDCALARNLFFGTMVRLETIHNAVTQAQIVASSICGTSTPAPTPPRFWSDLKGMTLQGLGALKDYDKLVVAINNETVELEVLAYKQERLIATETINLPKRQGALGGSIKLPD.

FAD is bound by residues 8–11, 32–33, isoleucine 79, glutamate 156, aspartate 275, and isoleucine 293; these read AGTA and SR.

It belongs to the FAD-dependent oxidoreductase family. As to quaternary structure, homodimer. Requires FAD as cofactor.

Its subcellular location is the cytoplasm. The catalysed reaction is 2 reduced [rubredoxin] + NAD(+) + H(+) = 2 oxidized [rubredoxin] + NADH. It participates in hydrocarbon metabolism; alkane degradation. In terms of biological role, involved in the hydrocarbon hydroxylating system, which transfers electrons from NADH to rubredoxin reductase and then through rubredoxin to alkane 1 monooxygenase. The polypeptide is Rubredoxin-NAD(+) reductase (alkT) (Pseudomonas putida (Arthrobacter siderocapsulatus)).